A 505-amino-acid chain; its full sequence is Trans-cinnamate 4-monooxygenase (505 aa).

A helical transmembrane segment spans residues leucine 3–isoleucine 23. Residues arginine 212 to glutamine 217 and alanine 305 contribute to the (E)-cinnamate site. Cysteine 446 is a binding site for heme.

It belongs to the cytochrome P450 family. Heme serves as cofactor.

The protein resides in the membrane. The catalysed reaction is (E)-cinnamate + reduced [NADPH--hemoprotein reductase] + O2 = (E)-4-coumarate + oxidized [NADPH--hemoprotein reductase] + H2O + H(+). Its pathway is phenylpropanoid metabolism; trans-4-coumarate biosynthesis; trans-4-coumarate from trans-cinnamate: step 1/1. Functionally, catalyzes the first oxidative step of the phenylpropanoid pathway in higher plants by transforming trans-cinnamate into p-coumarate. The compounds formed by this pathway are essential components for lignification, pollination, and defense against ultraviolet light, predators and pathogens. This is Trans-cinnamate 4-monooxygenase (CYP73A19) from Cicer arietinum (Chickpea).